Consider the following 228-residue polypeptide: MSLSNSLGLLGRKVGMMRLFTDEGDSIPVTVVDVSNNRVTQVKTQENDGYVALQVTFGARKASRVTKPAAGHLAKAGVEAGEIIREFRLTADVAAQYKAGATVPVTAVFAVGQKVDVQGTTIGKGFAGTIKRHHMKSQRASHGNSRSHNVPGSIGMAQDPGRVFPGKRMTGHLGDDTVTTQNLDVIRIDEARQLLMIKGAVPGSAGGFVTVRPAVKVKANNTDVKGAN.

Residues 135-159 (MKSQRASHGNSRSHNVPGSIGMAQD) are disordered. Residues 140–150 (ASHGNSRSHNV) are compositionally biased toward polar residues. At Gln-158 the chain carries N5-methylglutamine.

Belongs to the universal ribosomal protein uL3 family. As to quaternary structure, part of the 50S ribosomal subunit. Forms a cluster with proteins L14 and L19. In terms of processing, methylated by PrmB.

Functionally, one of the primary rRNA binding proteins, it binds directly near the 3'-end of the 23S rRNA, where it nucleates assembly of the 50S subunit. This Albidiferax ferrireducens (strain ATCC BAA-621 / DSM 15236 / T118) (Rhodoferax ferrireducens) protein is Large ribosomal subunit protein uL3.